The following is a 227-amino-acid chain: Enolase-phosphatase E1 (227 aa).

Positions 11 and 13 each coordinate Mg(2+). Substrate is bound by residues 118–119 and lysine 161; that span reads SS. Aspartate 186 is a binding site for Mg(2+).

The protein belongs to the HAD-like hydrolase superfamily. MasA/MtnC family. As to quaternary structure, monomer. Requires Mg(2+) as cofactor.

The protein resides in the cytoplasm. The protein localises to the nucleus. The catalysed reaction is 5-methylsulfanyl-2,3-dioxopentyl phosphate + H2O = 1,2-dihydroxy-5-(methylsulfanyl)pent-1-en-3-one + phosphate. It participates in amino-acid biosynthesis; L-methionine biosynthesis via salvage pathway; L-methionine from S-methyl-5-thio-alpha-D-ribose 1-phosphate: step 3/6. The protein operates within amino-acid biosynthesis; L-methionine biosynthesis via salvage pathway; L-methionine from S-methyl-5-thio-alpha-D-ribose 1-phosphate: step 4/6. Bifunctional enzyme that catalyzes the enolization of 2,3-diketo-5-methylthiopentyl-1-phosphate (DK-MTP-1-P) into the intermediate 2-hydroxy-3-keto-5-methylthiopentenyl-1-phosphate (HK-MTPenyl-1-P), which is then dephosphorylated to form the acireductone 1,2-dihydroxy-3-keto-5-methylthiopentene (DHK-MTPene). In Saccharomyces cerevisiae (strain JAY291) (Baker's yeast), this protein is Enolase-phosphatase E1.